Here is a 585-residue protein sequence, read N- to C-terminus: S-antigen protein (585 aa).

The first 23 residues, 1-23 (MNRILSVTLCLFFIYLYIYKTYG), serve as a signal peptide directing secretion. The segment at 51 to 585 (NGKGQKYEDL…NSIINMLIGM (535 aa)) is disordered. Over residues 59 to 85 (DLEEEKEGENDDEEDSNSEESNNDEEN) the composition is skewed to acidic residues. Basic and acidic residues predominate over residues 96 to 113 (QETHGSEDEVSNGREDKV). 56 repeat units span residues 102–109 (EDEVSNGR), 110–117 (EDKVSNGG), 118–125 (EDEVSNGG), 126–133 (EDEVSNGR), 134–141 (EDKVSNGG), 142–149 (EDEVSNGR), 150–157 (EDKVSNGG), 158–165 (EDEVSNGR), 166–173 (EDKVSNGG), 174–181 (EDEVSNGR), 182–189 (EDKVSNGG), 190–197 (EDEVSNGR), 198–205 (EDKVSNGR), 206–213 (EDKVSNGG), 214–221 (EDEVSNGR), 222–229 (EDKVSNGR), 230–237 (EDKVSNGG), 238–245 (EDEVSNGR), 246–253 (EDKVSNGG), 254–261 (EDEVSNGR), 262–269 (EDKVSNGG), 270–277 (EDEVSNGR), 278–285 (EDKVSNGR), 286–293 (EDEVSNGR), 294–301 (EDKVSNGG), 302–309 (EDEVSNGR), 310–317 (EDKVSNGG), 318–325 (EDEVSNGR), 326–333 (EDKVSNGR), 334–341 (EDKVSNGG), 342–349 (EDEVSNGR), 350–357 (EDKVSNGG), 358–365 (EDEVSNGR), 366–373 (EDKVSNGR), 374–381 (EDKVSNGR), 382–389 (EDEVSNGR), 390–397 (EDKVSNGG), 398–405 (EDEVSNGR), 406–413 (EDKVSNGR), 414–421 (EDKVSNGG), 422–429 (EDEVSNGR), 430–437 (EDKVSNGG), 438–445 (EDEVSNGR), 446–453 (EDKVSNGR), 454–461 (EDKVSNGR), 462–469 (EDKVSNGG), 470–477 (EDEVSNGG), 478–485 (EDEVSNGR), 486–493 (EDKVSNGG), 494–501 (EDEVSNGR), 502–509 (EDKVSNGG), 510–517 (EDEVSNGR), 518–525 (EDKVSNGG), 526–533 (EDEVSNGR), 534–541 (EDKVSNGR), and 542–549 (EDEVSNGR). The 56 X 8 AA tandem repeats of E-D-[EK]-V-S-N-G-[RG] stretch occupies residues 102-549 (EDEVSNGRED…GREDEVSNGR (448 aa)). Positions 117 to 129 (GEDEVSNGGEDEV) are enriched in acidic residues. Composition is skewed to basic and acidic residues over residues 194–209 (SNGR…EDKV) and 218–233 (SNGR…EDKV). Over residues 274 to 297 (SNGREDKVSNGREDEVSNGREDKV) the composition is skewed to basic and acidic residues. A compositionally biased stretch (basic and acidic residues) spans 322-337 (SNGREDKVSNGREDKV). 2 stretches are compositionally biased toward basic and acidic residues: residues 362 to 393 (SNGR…EDKV) and 402 to 417 (SNGR…EDKV). Positions 442–465 (SNGREDKVSNGREDKVSNGREDKV) are enriched in basic and acidic residues. Residues 469–481 (GEDEVSNGGEDEV) are compositionally biased toward acidic residues. 2 stretches are compositionally biased toward basic and acidic residues: residues 530–553 (SNGR…EDKG) and 560–569 (ELSHNSESHT). A compositionally biased stretch (low complexity) spans 576–585 (NSIINMLIGM).

The protein resides in the parasitophorous vacuole. Its function is as follows. S antigens are soluble heat-stable proteins present in the sera of some infected individuals. The polypeptide is S-antigen protein (Plasmodium falciparum (isolate 3D7)).